The primary structure comprises 336 residues: Probable allantoicase (336 aa).

It belongs to the allantoicase family.

It catalyses the reaction allantoate + H2O = (S)-ureidoglycolate + urea. It functions in the pathway nitrogen metabolism; (S)-allantoin degradation; (S)-ureidoglycolate from allantoate (aminidohydrolase route): step 1/1. The polypeptide is Probable allantoicase (Acinetobacter baumannii (strain SDF)).